The following is a 340-amino-acid chain: Large ribosomal subunit protein uL29m (340 aa).

Residues 1-10 are compositionally biased toward polar residues; it reads MIRSLHTSAV. The disordered stretch occupies residues 1 to 22; sequence MIRSLHTSAVRQGRKKWPKPLP.

Belongs to the universal ribosomal protein uL29 family. In terms of assembly, component of the mitochondrial large ribosomal subunit. Mature mitochondrial ribosomes consist of a small (37S) and a large (54S) subunit. The 37S subunit contains at least 33 different proteins and 1 molecule of RNA (15S). The 54S subunit contains at least 45 different proteins and 1 molecule of RNA (21S).

The protein resides in the mitochondrion. In Yarrowia lipolytica (strain CLIB 122 / E 150) (Yeast), this protein is Large ribosomal subunit protein uL29m (MRPL4).